A 432-amino-acid chain; its full sequence is uncharacterized protein (432 aa).

3 disordered regions span residues 37-61 (DGIG…SADC), 127-151 (RDHD…DTRY), and 298-378 (SVSS…NHQC). Over residues 312–335 (DSSTLANTQGFREDQSQQQHTPSP) the composition is skewed to polar residues. Over residues 341–366 (SSLSHQFHQSIHQSHQHHQSIYQSQH) the composition is skewed to low complexity.

This is an uncharacterized protein from Arabidopsis thaliana (Mouse-ear cress).